A 359-amino-acid chain; its full sequence is UPF0283 membrane protein RHECIAT_CH0002430 (359 aa).

Positions 1–50 (MSKPPSDPPRRPPAAFAYEDEASEPRNSGRQQQGRRKPESFSENIVVTPD) are disordered. 2 helical membrane-spanning segments follow: residues 77–97 (FGKIAAGAFGILLSLGLGLWT) and 111–131 (LGYAALGVLAIGILAVLALVI).

Belongs to the UPF0283 family.

The protein localises to the cell inner membrane. The chain is UPF0283 membrane protein RHECIAT_CH0002430 from Rhizobium etli (strain CIAT 652).